Here is an 80-residue protein sequence, read N- to C-terminus: RNA-binding protein Hfq (80 aa).

Positions 9 to 69 constitute a Sm domain; sequence DVFLNQVRKE…ISTILPITPI (61 aa).

Belongs to the Hfq family. Homohexamer.

In terms of biological role, RNA chaperone that binds small regulatory RNA (sRNAs) and mRNAs to facilitate mRNA translational regulation in response to envelope stress, environmental stress and changes in metabolite concentrations. Also binds with high specificity to tRNAs. This is RNA-binding protein Hfq from Alkaliphilus metalliredigens (strain QYMF).